Consider the following 520-residue polypeptide: MAYFNQHQSMISKRYLTFFSKSKKKKPFSAGQLIGLILGPLLFLLTLLFFHPQDLPWKGVYVLAITLWIATWWITEAIPIAATSLLPIVLLPLGHILTPEQVSSEYGNDIIFLFLGGFILAIAMERWNLHTRVALTIINLIGASTSKILLGFMVATGFLSMFVSNTAAVMIMIPIGLAIIKEAHDLQEANTNQTSIQKFEKSLVLAIGYAGTIGGLGTLIGTPPLIILKGQYMQHFGYEISFAKWMIVGIPTVIVLLGITWLYLRYVAFRHDLKYLPGGQTLIKQKLDELGKMKYEEKVVQTIFVLASLLWITREFLLKKWEVTSSVADGTIAIFISILLFIIPAKNTEKHRRIIDWEVAKELPWGVLILFGGGLALAKGISESGLAKWLGEQLKSLNGVSPILIVIVITIFVLFLTEVTSNTATATMILPILATLSVAVGVHPLLLMAPAAMAANCAYMLPVGTPPNAIIFGSGKISIKQMASVGFWVNLISAIIIILVVYYVMPIVLGIDINQPLPLK.

Helical transmembrane passes span 30–50 (AGQL…LLFF), 55–75 (LPWK…WWIT), 77–97 (AIPI…GHIL), 104–124 (SEYG…AIAM), 160–180 (SMFV…LAII), 207–227 (IGYA…PLII), 242–262 (FAKW…ITWL), 298–318 (KVVQ…EFLL), 323–343 (VTSS…LFII), 362–382 (ELPW…KGIS), 399–419 (GVSP…LTEV), 428–448 (MILP…LLLM), 452–472 (AMAA…AIIF), and 491–511 (LISA…VLGI).

This sequence belongs to the SLC13A/DASS transporter (TC 2.A.47) family. NADC subfamily.

It localises to the cell membrane. Functionally, mediates the transport of the dicarboxylates fumarate, malate, and succinate across the cytoplasmic membrane via a Na(+)-electrochemical gradient. In Staphylococcus aureus (strain USA300), this protein is Sodium-dependent dicarboxylate transporter SdcS (sdcS).